The following is a 103-amino-acid chain: Large ribosomal subunit protein uL23 (103 aa).

Belongs to the universal ribosomal protein uL23 family. As to quaternary structure, part of the 50S ribosomal subunit. Contacts protein L29, and trigger factor when it is bound to the ribosome.

Functionally, one of the early assembly proteins it binds 23S rRNA. One of the proteins that surrounds the polypeptide exit tunnel on the outside of the ribosome. Forms the main docking site for trigger factor binding to the ribosome. The polypeptide is Large ribosomal subunit protein uL23 (Pelodictyon phaeoclathratiforme (strain DSM 5477 / BU-1)).